Reading from the N-terminus, the 179-residue chain is Large ribosomal subunit protein uL5 (179 aa).

The protein belongs to the universal ribosomal protein uL5 family. In terms of assembly, part of the 50S ribosomal subunit; part of the 5S rRNA/L5/L18/L25 subcomplex. Contacts the 5S rRNA and the P site tRNA. Forms a bridge to the 30S subunit in the 70S ribosome.

Its function is as follows. This is one of the proteins that bind and probably mediate the attachment of the 5S RNA into the large ribosomal subunit, where it forms part of the central protuberance. In the 70S ribosome it contacts protein S13 of the 30S subunit (bridge B1b), connecting the 2 subunits; this bridge is implicated in subunit movement. Contacts the P site tRNA; the 5S rRNA and some of its associated proteins might help stabilize positioning of ribosome-bound tRNAs. The sequence is that of Large ribosomal subunit protein uL5 from Vibrio campbellii (strain ATCC BAA-1116).